Consider the following 183-residue polypeptide: Ras-related protein Rap-2a (183 aa).

GTP is bound at residue 10–17 (GSGGVGKS). Residues 32–40 (YDPTIEDFY) carry the Effector region motif. GTP contacts are provided by residues 57–61 (DTAGT) and 116–119 (NKVD). S-palmitoyl cysteine attachment occurs at residues cysteine 176 and cysteine 177. Cysteine 180 carries the post-translational modification Cysteine methyl ester. Cysteine 180 is lipidated: S-farnesyl cysteine. The propeptide at 181 to 183 (NIQ) is removed in mature form.

The protein belongs to the small GTPase superfamily. Ras family. Interacts with PLCE1. Interacts with ARHGAP29, SGSM1, SGSM2 and SGSM3. Interacts (GTP-bound form preferentially) with MAP4K4. Interacts with MINK1. Interacts with cytoskeletal actin. Interacts (GTP-bound form) with RUNDC3A. Interacts (GTP-bound form preferentially) with TNIK (via the CNH domain); the interaction is direct and recruits RAP2A to the E3 ubiquitin ligase NEDD4. Interacts with RGS14; the interaction is GTP-dependent. Ubiquitinated; undergoes 'Lys-63' monoubiquitination and diubiquitination by NEDD4. Multiple lysine residues are probably modified. Ubiquitination requires TNIK, prevents interaction with effectors and inactivates RAP2A. Ubiquitination by the ECS(RAB40B) complex leads to RAP2A localization to lamellipodia plasma membrane, activation, and regulation of sorting at early endosomes for recycling to the lamellipodia plasma membrane. In terms of processing, palmitoylated. Palmitoylation is required for association with recycling endosome membranes and activation of TNIK. Expressed in granular layer of the cerebellum, forebrain, striatum, layer V of the cortex, olfactory cortex, tubercules, subthalamic and hippocampus, particularly in the CA2 region, to a lesser extent in the CA1 region and the external layer of the dentate gyrus. Expressed in neurons.

It localises to the midbody. The protein resides in the cell projection. It is found in the lamellipodium membrane. The protein localises to the golgi apparatus. Its subcellular location is the recycling endosome membrane. It localises to the lysosome. It carries out the reaction GTP + H2O = GDP + phosphate + H(+). Its activity is regulated as follows. Activated by the guanine nucleotide-exchange factors RAPGEF3 and RAPGEF4 in a cAMP-dependent manner. Nucleotide exchange is also specifically stimulated by RAPGEF5, RASGEF1A and RASGEF1B. In terms of biological role, small GTP-binding protein which cycles between a GDP-bound inactive and a GTP-bound active form. In its active form interacts with and regulates several effectors including MAP4K4, MINK1 and TNIK. Part of a signaling complex composed of NEDD4, RAP2A and TNIK which regulates neuronal dendrite extension and arborization during development. More generally, it is part of several signaling cascades and may regulate cytoskeletal rearrangements, cell migration, cell adhesion and cell spreading. In Mus musculus (Mouse), this protein is Ras-related protein Rap-2a.